A 286-amino-acid chain; its full sequence is MQMTAEEKEISMDTPAKTATRDIYIPSERKSVSGGGKPHVVAKDFSIFYGDFEAVKKVNADILSKYVTAIIGPSGCGKSTFLRAINRMNDLIPSCHTTGTLRFDGEDIYGKLTDEVLLRKKIGMVFQKPNPFPKSIFDNIAYGPRLHGMNDKKQLAEVVEKSLRKAALWDEVSDRLERNALGLSGGQQQRLCVARTLAVEPEILLLDEPTSALDPKATAKIEDLIQELRGSYTIMIVTHNMQQASRVSDYTMFFYEGTLVEHAGTSQLFTNPRDRMTEDYITGRFS.

One can recognise an ABC transporter domain in the interval 40 to 281 (VVAKDFSIFY…PRDRMTEDYI (242 aa)). 72 to 79 (GPSGCGKS) is a binding site for ATP.

Belongs to the ABC transporter superfamily. Phosphate importer (TC 3.A.1.7) family. As to quaternary structure, the complex is composed of two ATP-binding proteins (PstB), two transmembrane proteins (PstC and PstA) and a solute-binding protein (PstS).

It is found in the cell inner membrane. It catalyses the reaction phosphate(out) + ATP + H2O = ADP + 2 phosphate(in) + H(+). Functionally, part of the ABC transporter complex PstSACB involved in phosphate import. Responsible for energy coupling to the transport system. This Chlorobium luteolum (strain DSM 273 / BCRC 81028 / 2530) (Pelodictyon luteolum) protein is Phosphate import ATP-binding protein PstB.